The sequence spans 146 residues: VHLTADEKAAVTALWGKVDVEDVGGEALGRLLVVYPWTQRFFDSFGDLSTPAAVMGNAKVKAHGKKVLNAFSEGMAHLDNLKGTFAKLSELHCDKLHVDPENFRLLGNVLVCVLAHHFGKEFTPQVQAAYQKVVAGVATALAHKYH.

N-acetylvaline is present on valine 1. The Globin domain occupies 2 to 146 (HLTADEKAAV…VATALAHKYH (145 aa)). Residue threonine 12 is modified to Phosphothreonine. Serine 44 carries the phosphoserine modification. Residue lysine 59 is modified to N6-acetyllysine. Residue histidine 63 coordinates heme b. At lysine 82 the chain carries N6-acetyllysine. A heme b-binding site is contributed by histidine 92. Position 93 is an S-nitrosocysteine (cysteine 93). At lysine 144 the chain carries N6-acetyllysine.

This sequence belongs to the globin family. As to quaternary structure, heterotetramer of two alpha chains and two beta chains. Red blood cells.

Functionally, involved in oxygen transport from the lung to the various peripheral tissues. This is Hemoglobin subunit beta (HBB) from Cephalopachus bancanus (Western tarsier).